A 300-amino-acid chain; its full sequence is Inosose dehydratase (300 aa).

This sequence belongs to the IolE/MocC family. Glutathione serves as cofactor. Requires Co(2+) as cofactor. The cofactor is Mn(2+).

It catalyses the reaction scyllo-inosose = 3D-3,5/4-trihydroxycyclohexane-1,2-dione + H2O. Its function is as follows. Catalyzes the dehydration of inosose (2-keto-myo-inositol, 2KMI or 2,4,6/3,5-pentahydroxycyclohexanone) to 3D-(3,5/4)-trihydroxycyclohexane-1,2-dione (D-2,3-diketo-4-deoxy-epi-inositol). This is Inosose dehydratase from Mesomycoplasma hyopneumoniae (strain J / ATCC 25934 / NCTC 10110) (Mycoplasma hyopneumoniae).